We begin with the raw amino-acid sequence, 191 residues long: Peptidyl-tRNA hydrolase (191 aa).

Y16 serves as a coordination point for tRNA. H21 acts as the Proton acceptor in catalysis. Residues F66, N68, and N114 each contribute to the tRNA site.

The protein belongs to the PTH family. As to quaternary structure, monomer.

The protein localises to the cytoplasm. It carries out the reaction an N-acyl-L-alpha-aminoacyl-tRNA + H2O = an N-acyl-L-amino acid + a tRNA + H(+). Its function is as follows. Hydrolyzes ribosome-free peptidyl-tRNAs (with 1 or more amino acids incorporated), which drop off the ribosome during protein synthesis, or as a result of ribosome stalling. Functionally, catalyzes the release of premature peptidyl moieties from peptidyl-tRNA molecules trapped in stalled 50S ribosomal subunits, and thus maintains levels of free tRNAs and 50S ribosomes. This chain is Peptidyl-tRNA hydrolase, found in Geotalea daltonii (strain DSM 22248 / JCM 15807 / FRC-32) (Geobacter daltonii).